A 528-amino-acid chain; its full sequence is MAHQHFFKPLLPGFHASLTIPVAFFLKYIEGRYEQKTAKLRSDASKRTWEVKIDGQRLTDGWKEFAVSHDLRIGDIVVFRQESDLAFHVTLLGPSCCGIQYGSCSVEKNNLGDEKKKVKENPNGEAESSSRDPSCFVANVAPSSLRYDLMRFPRGFVRDNGVVGSGEIVLMNEKGRSWNFNLRQKPSNGTVYVRGGWVSFCDANGLKAGDNYTFKLIKRAGTLVLRLLPNEPKEEANEVSLPEEPESDAERNLEKIQRKEKVKKNVTREAESSSQDPSCFVANVSPSSLRYDTLYLPKRFMRENGVDKRCGEMILINEKGKSWTLDLKVKKSSGTSLIKRGWRSFCSANGLRAGSIITLKLIKKRATLVLRLIPNEPEEANEVVSLSTEQESDEESIHDEKISRRKSLLSENRFVTLTLTPYTIQSSLLNENLLCESMFQRLPVPFTRMNGINEETKMTLLDKHGVKWLTTLRFEDDKRKRLRMVGGWQGFIQANDVKANESIMLELIWEEETSCVLKFCSKVKLEIK.

2 DNA-binding regions (TF-B3) span residues 3 to 95 (HQHF…LGPS) and 135 to 231 (CFVA…LPNE). The interval 234 to 253 (EEANEVSLPEEPESDAERNL) is disordered. 2 DNA-binding regions (TF-B3) span residues 279-376 (CFVA…IPNE) and 425-522 (QSSL…FCSK).

The protein resides in the nucleus. This is Putative B3 domain-containing protein REM15 (REM15.15) from Arabidopsis thaliana (Mouse-ear cress).